The following is a 217-amino-acid chain: Dual specificity phosphatase 29 (217 aa).

A Tyrosine-protein phosphatase domain is found at 46–194 (HVNEVWPNLY…LRELDIKLAL (149 aa)). 138-145 (HCAMGRSR) serves as a coordination point for substrate. Residue C139 is the Phosphocysteine intermediate of the active site.

This sequence belongs to the protein-tyrosine phosphatase family. Non-receptor class dual specificity subfamily.

The protein localises to the cytoplasm. The protein resides in the nucleus. The catalysed reaction is O-phospho-L-tyrosyl-[protein] + H2O = L-tyrosyl-[protein] + phosphate. It carries out the reaction O-phospho-L-seryl-[protein] + H2O = L-seryl-[protein] + phosphate. It catalyses the reaction O-phospho-L-threonyl-[protein] + H2O = L-threonyl-[protein] + phosphate. Functionally, dual specificity phosphatase able to dephosphorylate phosphotyrosine, phosphoserine and phosphothreonine residues within the same substrate, with a preference for phosphotyrosine as a substrate. Involved in the modulation of AMPK and MAPK1/2 signaling pathways. This is Dual specificity phosphatase 29 (DUSP29) from Anolis carolinensis (Green anole).